A 262-amino-acid chain; its full sequence is MATYAVLGATGNCGTALIDNLLRTEGAQIHAFCRNKPKLMQKMPALVDHKRVQIYEGSIDDIDLLAECIRGTRAIFHVVTTNDNVPGCQVGLDTAQSIIAALESLQALEPEGTKPPKIVLLSSGTIDDHLSRHMPSFFRRILRAAASHVYEDLRRTEAFLRAQPDGVSTIFIKPGGLSIDVQRGHALNLDRDESFVSYLDLAAAMIEAADDPDDRFDGKNVSVANTNGAARFPMGTPLCILTGLARHSFPWLHRYLPATGPG.

It belongs to the avfA family.

Its pathway is secondary metabolite biosynthesis. Oxidoreductase; part of the gene cluster that mediates the biosynthesis of agnestins, dihydroxy-xanthone metabolites. The pathway begins with the assembly and cyclization of atrochrysone thioester by the non-reducing polyketide synthase Agnpks1. The atrochrysone carboxyl ACP thioesterase AgnL7 then breaks the thioester bond and releases the atrochrysone carboxylic acid as the first enzyme-free intermediate. The decarboxylase AgnL1 then catalyzes the concerted decarboxylation-elimination required to convert atochrysone carboxylic acid into emodin anthrone, which is further oxidized to emodin by the anthrone oxygenase AgnL2. Emodin then undergoes reduction catalyzed by the oxidoreductase AgnL4 to yield the dihydroquinone tautomer which is the substrate for reduction by the short chain dehydrogenase AgnL6 reduction to produce hydroxyketone, followed by AgnL8 dehydration and likely spontaneous autoxidation to chrysophanol. Baeyer-Villiger oxidation by the oxidase AgnL3 leads to monodictyphenone via cleavage of the C-10/C-10a bond of chrysophanol. Alternative cleavage at the C-4a/C-10 bond of chrysophanol also leads to the formation some cephalone F. Further conversion to agnestins A and B, requires reduction to dihydro-monodictyphenone, oxidation to agnestin C probably via an epoxide, and rearrangement to either agnestin A or agnestin B directly, although agnestin A or agnestin B can also interconvert. Within the cluster, AgnR1 is the only unassigned oxidoreductase present which could be involved in this conversion. However, AgnR1 seems not to be involved in this step, and thus genes involved in the proposed oxidation/reduction may be located elsewhere on the genome. Further agnestin A derivatives are probably formed by spontaneous decarboxylations, dehydrations and methanolysis reactions. This is Oxidoreductase AgnL4 from Paecilomyces divaricatus (Penicillium divaricatum).